A 482-amino-acid polypeptide reads, in one-letter code: Carbamoyl phosphate synthase large chain, N-terminal section (482 aa).

Residues 1–398 (MESIKKVMVF…ALQKAIRSLD (398 aa)) are carboxyphosphate synthetic domain. Positions 126, 166, 172, 173, 205, 207, 212, 238, 239, 240, 281, and 295 each coordinate ATP. Positions 130–324 (AEAMAEINEP…IARIAAKIAI (195 aa)) constitute an ATP-grasp domain. Positions 281, 295, and 297 each coordinate Mg(2+). Positions 281, 295, and 297 each coordinate Mn(2+).

This sequence belongs to the CarB family. As to quaternary structure, composed of two chains; the small (or glutamine) chain promotes the hydrolysis of glutamine to ammonia, which is used by the large (or ammonia) chain to synthesize carbamoyl phosphate. Tetramer of heterodimers (alpha,beta)4. The cofactor is Mg(2+). Requires Mn(2+) as cofactor.

The catalysed reaction is hydrogencarbonate + L-glutamine + 2 ATP + H2O = carbamoyl phosphate + L-glutamate + 2 ADP + phosphate + 2 H(+). It carries out the reaction hydrogencarbonate + NH4(+) + 2 ATP = carbamoyl phosphate + 2 ADP + phosphate + 2 H(+). Its pathway is amino-acid biosynthesis; L-arginine biosynthesis; carbamoyl phosphate from bicarbonate: step 1/1. It participates in pyrimidine metabolism; UMP biosynthesis via de novo pathway; (S)-dihydroorotate from bicarbonate: step 1/3. Functionally, large subunit of the glutamine-dependent carbamoyl phosphate synthetase (CPSase). CPSase catalyzes the formation of carbamoyl phosphate from the ammonia moiety of glutamine, carbonate, and phosphate donated by ATP, constituting the first step of 2 biosynthetic pathways, one leading to arginine and/or urea and the other to pyrimidine nucleotides. The large subunit (synthetase) binds the substrates ammonia (free or transferred from glutamine from the small subunit), hydrogencarbonate and ATP and carries out an ATP-coupled ligase reaction, activating hydrogencarbonate by forming carboxy phosphate which reacts with ammonia to form carbamoyl phosphate. The chain is Carbamoyl phosphate synthase large chain, N-terminal section (carB1) from Methanocaldococcus jannaschii (strain ATCC 43067 / DSM 2661 / JAL-1 / JCM 10045 / NBRC 100440) (Methanococcus jannaschii).